The chain runs to 1137 residues: Phytochrome C (1137 aa).

Residues 1–18 (MSSSRSNNRATCSRSSSA) show a composition bias toward low complexity. The tract at residues 1 to 27 (MSSSRSNNRATCSRSSSARSKHSARVV) is disordered. Residues 217–400 (NLSLLCDVLV…VFGIQINKEV (184 aa)) form the GAF domain. C322 is a binding site for phytochromobilin. PAS domains are found at residues 620-690 (VTNE…LQGI) and 750-824 (IQGD…TKLS). Residues 904 to 1124 (YIRQELRNPL…IVLVEFPVAQ (221 aa)) enclose the Histidine kinase domain.

It belongs to the phytochrome family. Homodimer. Post-translationally, contains one covalently linked phytochromobilin chromophore.

In terms of biological role, regulatory photoreceptor which exists in two forms that are reversibly interconvertible by light: the Pr form that absorbs maximally in the red region of the spectrum and the Pfr form that absorbs maximally in the far-red region. Photoconversion of Pr to Pfr induces an array of morphogenic responses, whereas reconversion of Pfr to Pr cancels the induction of those responses. Pfr controls the expression of a number of nuclear genes including those encoding the small subunit of ribulose-bisphosphate carboxylase, chlorophyll A/B binding protein, protochlorophyllide reductase, rRNA, etc. It also controls the expression of its own gene(s) in a negative feedback fashion. This Oryza sativa subsp. indica (Rice) protein is Phytochrome C (PHYC).